Here is a 466-residue protein sequence, read N- to C-terminus: MTHASVVDVLTGKYAVGTTQTVKGWIRTRRDSKAGISFLAISDGSCFHPVQAVVPNTLANYENEVLRLTTACSVEVTGVVAASQGSGQAFELQATEVKVVGWVEDPDTYPMAAKRHSIEYLREQGHLRARTNMVGAVTRVRNCLSQAIHRFFHEQGYLWIAAPLITASDTEGAGEMFRVSTLDMENLPRTPAGKVDYDKDFFGKETFLTVSGQLNVETYACALSKVYTFGPTFRAENSNTSRHLAEFWMVEPEVAFADLEDNAALAEAMLKYVFNAVLAERRDDLEFFAQHVDKDAIGRLERFVASDFAQIDYTDAIEVLKNCGKKFEFPVSWGIDLSSEHERYLAEEHFKSPVVVKNYPKDIKAFYMRLNDDGKTVAAMDVLAPGIGEIIGGSQREERLDVLDARLAEMGLNKEDYWWYRDLRRYGTVPHSGFGLGFERLVVYVTGMGNVRDVIPFPRTPRTAEF.

The protein belongs to the class-II aminoacyl-tRNA synthetase family. As to quaternary structure, homodimer.

The protein resides in the cytoplasm. The enzyme catalyses tRNA(Asn) + L-asparagine + ATP = L-asparaginyl-tRNA(Asn) + AMP + diphosphate + H(+). This is Asparagine--tRNA ligase from Aeromonas hydrophila subsp. hydrophila (strain ATCC 7966 / DSM 30187 / BCRC 13018 / CCUG 14551 / JCM 1027 / KCTC 2358 / NCIMB 9240 / NCTC 8049).